We begin with the raw amino-acid sequence, 285 residues long: Chromatin modification-related protein YNG2 (285 aa).

Disordered regions lie at residues 1–24 (MSFERPQDPSSALEQATQDVSNLK) and 155–201 (RTVA…GANF). Over residues 8 to 24 (DPSSALEQATQDVSNLK) the composition is skewed to polar residues. Positions 10–36 (SSALEQATQDVSNLKSESRFLLEEIRA) form a coiled coil. A PHD-type zinc finger spans residues 224 to 273 (QLYCFCQSVSYGEMVACDGPNCKYEWFHYGCVNLDEPPKGQWYCPECRQE). Residues C227, C229, C240, C245, H251, C254, C267, and C270 each coordinate Zn(2+).

It belongs to the ING family. Interacts with H3K4me3 and to a lesser extent with H3K4me2. Component of the NuA4 histone acetyltransferase complex.

The protein resides in the nucleus. In terms of biological role, component of the NuA4 histone acetyltransferase complex which is involved in transcriptional activation of selected genes principally by acetylation of nucleosomal histone H4 and H2A. The NuA4 complex is also involved in DNA repair. Involved in cell cycle progression and meiosis. The polypeptide is Chromatin modification-related protein YNG2 (YNG2) (Eremothecium gossypii (strain ATCC 10895 / CBS 109.51 / FGSC 9923 / NRRL Y-1056) (Yeast)).